The chain runs to 263 residues: Flagellar brake protein YcgR (263 aa).

Residues 1 to 21 (MAELSTPSPASPAPLDGGRGD) form a disordered region. One can recognise a PilZ domain in the interval 133–250 (QRREFYRLQV…DTRIQRYIFK (118 aa)).

The protein belongs to the YcgR family. In terms of assembly, monomer. Interacts with the flagellar basal bodies.

The protein localises to the bacterial flagellum basal body. Its function is as follows. Acts as a flagellar brake, regulating swimming and swarming in a bis-(3'-5') cyclic diguanylic acid (c-di-GMP)-dependent manner. Binds 1 c-di-GMP dimer per subunit. Increasing levels of c-di-GMP lead to decreased motility. This Thauera aminoaromatica protein is Flagellar brake protein YcgR.